The primary structure comprises 205 residues: Large ribosomal subunit protein uL3 (205 aa).

It belongs to the universal ribosomal protein uL3 family. In terms of assembly, part of the 50S ribosomal subunit. Forms a cluster with proteins L14 and L19.

One of the primary rRNA binding proteins, it binds directly near the 3'-end of the 23S rRNA, where it nucleates assembly of the 50S subunit. The polypeptide is Large ribosomal subunit protein uL3 (Bacteroides fragilis (strain ATCC 25285 / DSM 2151 / CCUG 4856 / JCM 11019 / LMG 10263 / NCTC 9343 / Onslow / VPI 2553 / EN-2)).